A 677-amino-acid polypeptide reads, in one-letter code: Methionine--tRNA ligase (677 aa).

Positions Pro15 to His25 match the 'HIGH' region motif. Zn(2+) is bound by residues Cys146, Cys149, Cys159, and Cys162. The 'KMSKS' region signature appears at Lys333–Ser337. Residue Lys336 participates in ATP binding. One can recognise a tRNA-binding domain in the interval Asp575 to Lys677.

The protein belongs to the class-I aminoacyl-tRNA synthetase family. MetG type 1 subfamily. In terms of assembly, homodimer. The cofactor is Zn(2+).

It is found in the cytoplasm. It catalyses the reaction tRNA(Met) + L-methionine + ATP = L-methionyl-tRNA(Met) + AMP + diphosphate. Functionally, is required not only for elongation of protein synthesis but also for the initiation of all mRNA translation through initiator tRNA(fMet) aminoacylation. This chain is Methionine--tRNA ligase, found in Salmonella agona (strain SL483).